Consider the following 780-residue polypeptide: Aconitate hydratase, mitochondrial (780 aa).

Residues 1–27 (MAPYSLLVSRLQKALGARQYHVASVLC) constitute a mitochondrion transit peptide. At Lys31 the chain carries N6-succinyllysine. Lys50 is modified (N6-acetyllysine; alternate). Lys50 carries the post-translational modification N6-succinyllysine; alternate. Gln99 contributes to the substrate binding site. An N6-acetyllysine; alternate mark is found at Lys138 and Lys144. An N6-succinyllysine; alternate mark is found at Lys138 and Lys144. Residue 192-194 (DSH) participates in substrate binding. Lys233 bears the N6-acetyllysine; alternate mark. Residue Lys233 is modified to N6-succinyllysine; alternate. Cys385 is a [4Fe-4S] cluster binding site. Lys411 is modified (N6-succinyllysine). Residues Cys448 and Cys451 each contribute to the [4Fe-4S] cluster site. Substrate-binding residues include Arg474 and Arg479. Lys517 and Lys523 each carry N6-acetyllysine; alternate. N6-succinyllysine; alternate is present on residues Lys517 and Lys523. A compositionally biased stretch (basic and acidic residues) spans 524-537 (LEAPDADELPRAEF). Residues 524-560 (LEAPDADELPRAEFDPGQDTYQHPPKDSSGQQVDVSP) form a disordered region. The residue at position 549 (Lys549) is an N6-succinyllysine. The segment covering 551–560 (SSGQQVDVSP) has biased composition (polar residues). Ser559 carries the post-translational modification Phosphoserine. Position 573 is an N6-acetyllysine; alternate (Lys573). Residue Lys573 is modified to N6-succinyllysine; alternate. Position 591 is an N6-succinyllysine (Lys591). Lys605 bears the N6-acetyllysine; alternate mark. At Lys605 the chain carries N6-succinyllysine; alternate. Arg607 is a substrate binding site. At Lys628 the chain carries N6-succinyllysine. Ser670 is subject to Phosphoserine. 670–671 (SR) is a substrate binding site. An N6-succinyllysine modification is found at Lys689. 2 positions are modified to N6-acetyllysine; alternate: Lys723 and Lys730. Lys723 and Lys730 each carry N6-succinyllysine; alternate. Residues Lys736 and Lys743 each carry the N6-acetyllysine modification.

The protein belongs to the aconitase/IPM isomerase family. Monomer. [4Fe-4S] cluster is required as a cofactor. Forms covalent cross-links mediated by transglutaminase TGM2, between a glutamine and the epsilon-amino group of a lysine residue, forming homopolymers and heteropolymers.

Its subcellular location is the mitochondrion. The catalysed reaction is citrate = D-threo-isocitrate. The protein operates within carbohydrate metabolism; tricarboxylic acid cycle; isocitrate from oxaloacetate: step 2/2. Its function is as follows. Catalyzes the isomerization of citrate to isocitrate via cis-aconitate. The polypeptide is Aconitate hydratase, mitochondrial (ACO2) (Bos taurus (Bovine)).